The primary structure comprises 465 residues: Cysteine--tRNA ligase (465 aa).

Position 27 (C27) interacts with Zn(2+). A 'HIGH' region motif is present at residues 29 to 39 (PTVYNFFHIGN). Positions 207, 232, and 236 each coordinate Zn(2+). The 'KMSKS' region motif lies at 264–268 (KMSKS). K267 is an ATP binding site.

It belongs to the class-I aminoacyl-tRNA synthetase family. As to quaternary structure, monomer. It depends on Zn(2+) as a cofactor.

The protein resides in the cytoplasm. It carries out the reaction tRNA(Cys) + L-cysteine + ATP = L-cysteinyl-tRNA(Cys) + AMP + diphosphate. This Clostridium botulinum (strain Langeland / NCTC 10281 / Type F) protein is Cysteine--tRNA ligase.